A 757-amino-acid polypeptide reads, in one-letter code: Mitofusin-2 (757 aa).

Over 1–604 (MSLLFSRCNS…TQEELMVSMV (604 aa)) the chain is Cytoplasmic. The tract at residues 30-94 (KHFVTAKKKI…VRGISEVLAR (65 aa)) is part of a helix bundle domain, formed by helices from N-terminal and C-terminal regions. The Dynamin-type G domain maps to 93-342 (ARRHMKVAFF…VRMFEFQNFE (250 aa)). Residues 103–110 (GRTSNGKS) are G1 motif. A GTP-binding site is contributed by 106–111 (SNGKST). At Thr-111 the chain carries Phosphothreonine; by PINK1. Residues 129–130 (TT) are G2 motif. Residues 199 to 202 (DSPG) are G3 motif. 258 to 261 (NRWD) contributes to the GTP binding site. The interval 258–261 (NRWD) is G4 motif. Residue Glu-288 is a region of interest, G5 motif. GTP-binding residues include Ser-305 and Lys-307. A part of a helix bundle domain, formed by helices from N-terminal and C-terminal regions region spans residues 359–385 (EQHTVRAKQIAEAVRLIMDSLHIAAQE). Positions 406 to 434 (KQLELLAQDYKLRIKQITEEVERQVSTAM) form a coiled coil. Ser-442 is modified (phosphoserine). A helical transmembrane segment spans residues 605–625 (TGLASLTSRTSMGILVVGGVV). Position 626 (Trp-626) is a topological domain, mitochondrial intermembrane. The helical transmembrane segment at 627-647 (KAVGWRLIALSFGLYGLLYVY) threads the bilayer. At 648 to 757 (ERLTWTTKAK…FTHQYLQPSR (110 aa)) the chain is on the cytoplasmic side. A coiled-coil region spans residues 696 to 738 (FAHLCQQVDITRDNLEQEIAAMNKKVEALDSLQSRAKLLRNKA). Residues 722-753 (EALDSLQSRAKLLRNKAGWLDSELNMFTHQYL) form a part of a helix bundle domain, formed by helices from N-terminal and C-terminal regions region.

The protein belongs to the TRAFAC class dynamin-like GTPase superfamily. Dynamin/Fzo/YdjA family. Mitofusin subfamily. As to quaternary structure, forms homomultimers and heteromultimers with MFN1. Oligomerization is essential for mitochondrion fusion. Interacts with VAT1. Interacts with STOML2; may form heterooligomers. Interacts (phosphorylated) with PRKN. Interacts with EIF2AK3. Interacts with THG1L; THG1L probably functions as a guanyl-nucleotide exchange factor/GEF, activating MFN2. Phosphorylated by PINK1. In terms of processing, ubiquitinated by non-degradative ubiquitin by PRKN, promoting mitochondrial fusion; deubiquitination by USP30 inhibits mitochondrial fusion. Ubiquitinated by HUWE1 when dietary stearate (C18:0) levels are low; ubiquitination inhibits mitochondrial fusion. As to expression, ubiquitous. Expression is markedly reduced in ApoE-knockout mouse atherosclerotic arteries.

The protein localises to the mitochondrion outer membrane. The catalysed reaction is GTP + H2O = GDP + phosphate + H(+). In terms of biological role, mitochondrial outer membrane GTPase that mediates mitochondrial clustering and fusion. Mitochondria are highly dynamic organelles, and their morphology is determined by the equilibrium between mitochondrial fusion and fission events. Overexpression induces the formation of mitochondrial networks. Membrane clustering requires GTPase activity and may involve a major rearrangement of the coiled coil domains. Plays a central role in mitochondrial metabolism and may be associated with obesity and/or apoptosis processes. Plays an important role in the regulation of vascular smooth muscle cell proliferation. Involved in the clearance of damaged mitochondria via selective autophagy (mitophagy). Is required for PRKN recruitment to dysfunctional mitochondria. Involved in the control of unfolded protein response (UPR) upon ER stress including activation of apoptosis and autophagy during ER stress. Acts as an upstream regulator of EIF2AK3 and suppresses EIF2AK3 activation under basal conditions. The sequence is that of Mitofusin-2 (Mfn2) from Mus musculus (Mouse).